Consider the following 503-residue polypeptide: Potassium voltage-gated channel subfamily V member 1 (503 aa).

The Cytoplasmic segment spans residues 1-213 (MELLPPRGRA…EKPGSCTAAR (213 aa)). A helical membrane pass occupies residues 214-234 (IFGVISIIFVAVSIVNMALMS). Residues 235 to 246 (AELSWLDPQLLE) lie on the Extracellular side of the membrane. A helical membrane pass occupies residues 247–267 (ILEYVCISWFTGEFVLRFLCV). At 268–279 (RDRCRFLRKVPN) the chain is on the cytoplasmic side. A helical transmembrane segment spans residues 280–300 (IIDLLAILPFYITLLVESLSG). At 301-312 (SQTTQELENVGR) the chain is on the extracellular side. Residues 313–334 (IVQVLRLLRALRMLKLGRHSTG) traverse the membrane as a helical; Voltage-sensor segment. Residues 335–348 (LRSLGMTITQCYEE) are Cytoplasmic-facing. Residues 349–369 (VGLLLLFLSVGISIFSTVEYF) traverse the membrane as a helical segment. The Selectivity filter motif lies at 395 to 400 (TVGYGD). The chain crosses the membrane as a helical span at residues 410–430 (IVAFMCILSGILVLALPIAII). Residues 431–503 (NDRFSACYFT…RSSGGDDFWF (73 aa)) lie on the Cytoplasmic side of the membrane.

The protein belongs to the potassium channel family. V (TC 1.A.1.2) subfamily. Kv8.1/KCNV1 sub-subfamily. In terms of assembly, heteromultimer with KCNB1 and KCNB2. Interacts with KCNC4 and KCND1.

The protein localises to the cell membrane. In terms of biological role, potassium channel subunit that does not form functional channels by itself. Modulates KCNB1 and KCNB2 channel activity by shifting the threshold for inactivation to more negative values and by slowing the rate of inactivation. Can down-regulate the channel activity of KCNB1, KCNB2, KCNC4 and KCND1, possibly by trapping them in intracellular membranes. The polypeptide is Potassium voltage-gated channel subfamily V member 1 (KCNV1) (Bos taurus (Bovine)).